Here is a 494-residue protein sequence, read N- to C-terminus: Fumigaclavine B O-acetyltransferase easN (494 aa).

This sequence belongs to the fumigaclavine B O-acetyltransferase family. In terms of assembly, monomer.

The enzyme catalyses fumigaclavine B + acetyl-CoA = fumigaclavine A + CoA. It functions in the pathway alkaloid biosynthesis; ergot alkaloid biosynthesis. Its function is as follows. Fumigaclavine B O-acetyltransferase; part of the gene cluster that mediates the biosynthesis of fumiclavanine C, a fungal ergot alkaloid. DmaW catalyzes the first step of ergot alkaloid biosynthesis by condensing dimethylallyl diphosphate (DMAP) and tryptophan to form 4-dimethylallyl-L-tryptophan. The second step is catalyzed by the methyltransferase easF that methylates 4-dimethylallyl-L-tryptophan in the presence of S-adenosyl-L-methionine, resulting in the formation of 4-dimethylallyl-L-abrine. The catalase easC and the FAD-dependent oxidoreductase easE then transform 4-dimethylallyl-L-abrine to chanoclavine-I which is further oxidized by EasD in the presence of NAD(+), resulting in the formation of chanoclavine-I aldehyde. EasA reduces chanoclavine-I aldehyde to dihydrochanoclavine-I aldehyde that spontaneously dehydrates to form 6,8-dimethyl-6,7-didehydroergoline. EasG then catalyzes the reduction of 6,8-dimethyl-6,7-didehydroergoline to form festuclavine. Hydrolysis of festuclavine by easM then leads to the formation of fumigaclavine B which is in turn acetylated by easN to fumigaclavine A. Finally, easL catalyzes the conversion of fumigaclavine A into fumigaclavine C by attaching a dimethylallyl moiety to C-2 of the indole nucleus. In Aspergillus fumigatus (strain ATCC MYA-4609 / CBS 101355 / FGSC A1100 / Af293) (Neosartorya fumigata), this protein is Fumigaclavine B O-acetyltransferase easN.